Here is a 383-residue protein sequence, read N- to C-terminus: Acetylornithine deacetylase (383 aa).

Histidine 80 contributes to the Zn(2+) binding site. Aspartate 82 is a catalytic residue. Aspartate 112 contributes to the Zn(2+) binding site. Glutamate 144 is an active-site residue. 3 residues coordinate Zn(2+): glutamate 145, glutamate 169, and histidine 355.

This sequence belongs to the peptidase M20A family. ArgE subfamily. Homodimer. Zn(2+) serves as cofactor. Requires Co(2+) as cofactor. It depends on glutathione as a cofactor.

The protein localises to the cytoplasm. It carries out the reaction N(2)-acetyl-L-ornithine + H2O = L-ornithine + acetate. It participates in amino-acid biosynthesis; L-arginine biosynthesis; L-ornithine from N(2)-acetyl-L-ornithine (linear): step 1/1. In terms of biological role, catalyzes the hydrolysis of the amide bond of N(2)-acetylated L-amino acids. Cleaves the acetyl group from N-acetyl-L-ornithine to form L-ornithine, an intermediate in L-arginine biosynthesis pathway, and a branchpoint in the synthesis of polyamines. This chain is Acetylornithine deacetylase, found in Salmonella paratyphi A (strain ATCC 9150 / SARB42).